The sequence spans 182 residues: Crossover junction endodeoxyribonuclease RuvC (182 aa).

Active-site residues include Asp7, Glu69, and Asp141. Positions 7, 69, and 141 each coordinate Mg(2+).

Belongs to the RuvC family. In terms of assembly, homodimer which binds Holliday junction (HJ) DNA. The HJ becomes 2-fold symmetrical on binding to RuvC with unstacked arms; it has a different conformation from HJ DNA in complex with RuvA. In the full resolvosome a probable DNA-RuvA(4)-RuvB(12)-RuvC(2) complex forms which resolves the HJ. Mg(2+) serves as cofactor.

Its subcellular location is the cytoplasm. It catalyses the reaction Endonucleolytic cleavage at a junction such as a reciprocal single-stranded crossover between two homologous DNA duplexes (Holliday junction).. Its function is as follows. The RuvA-RuvB-RuvC complex processes Holliday junction (HJ) DNA during genetic recombination and DNA repair. Endonuclease that resolves HJ intermediates. Cleaves cruciform DNA by making single-stranded nicks across the HJ at symmetrical positions within the homologous arms, yielding a 5'-phosphate and a 3'-hydroxyl group; requires a central core of homology in the junction. The consensus cleavage sequence is 5'-(A/T)TT(C/G)-3'. Cleavage occurs on the 3'-side of the TT dinucleotide at the point of strand exchange. HJ branch migration catalyzed by RuvA-RuvB allows RuvC to scan DNA until it finds its consensus sequence, where it cleaves and resolves the cruciform DNA. This chain is Crossover junction endodeoxyribonuclease RuvC, found in Polaromonas naphthalenivorans (strain CJ2).